A 195-amino-acid polypeptide reads, in one-letter code: Ribonuclease HII (195 aa).

One can recognise an RNase H type-2 domain in the interval 6 to 195 (SLIAGVDEVG…KSFISRLKKN (190 aa)). Positions 12, 13, and 108 each coordinate a divalent metal cation.

This sequence belongs to the RNase HII family. The cofactor is Mn(2+). It depends on Mg(2+) as a cofactor.

Its subcellular location is the cytoplasm. The enzyme catalyses Endonucleolytic cleavage to 5'-phosphomonoester.. Functionally, endonuclease that specifically degrades the RNA of RNA-DNA hybrids. In Prochlorococcus marinus (strain NATL2A), this protein is Ribonuclease HII.